A 381-amino-acid chain; its full sequence is Chaperone protein DnaJ 1 (381 aa).

The J domain maps to 4 to 68 (DYYGLLGVSR…EKRRIVDLGG (65 aa)). Residues 132–214 (GVTKQVTVDT…CMGDGRVRAR (83 aa)) form a CR-type zinc finger. Zn(2+) contacts are provided by Cys145, Cys148, Cys162, Cys165, Cys188, Cys191, Cys202, and Cys205. CXXCXGXG motif repeat units lie at residues 145–152 (CDRCHGKG), 162–169 (CDTCGGRG), 188–195 (CPTCRGVG), and 202–209 (CHQCMGDG).

Belongs to the DnaJ family. Homodimer. The cofactor is Zn(2+).

It is found in the cytoplasm. Functionally, participates actively in the response to hyperosmotic and heat shock by preventing the aggregation of stress-denatured proteins and by disaggregating proteins, also in an autonomous, DnaK-independent fashion. Unfolded proteins bind initially to DnaJ; upon interaction with the DnaJ-bound protein, DnaK hydrolyzes its bound ATP, resulting in the formation of a stable complex. GrpE releases ADP from DnaK; ATP binding to DnaK triggers the release of the substrate protein, thus completing the reaction cycle. Several rounds of ATP-dependent interactions between DnaJ, DnaK and GrpE are required for fully efficient folding. Also involved, together with DnaK and GrpE, in the DNA replication of plasmids through activation of initiation proteins. In Mycolicibacterium paratuberculosis (strain ATCC BAA-968 / K-10) (Mycobacterium paratuberculosis), this protein is Chaperone protein DnaJ 1.